A 435-amino-acid polypeptide reads, in one-letter code: Gap junction alpha-3 protein (435 aa).

The stretch at 2-15 is an intramembrane region; the sequence is GDWSFLGRLLENAQ. The Cytoplasmic portion of the chain corresponds to 16–19; the sequence is EHST. A helical transmembrane segment spans residues 20–40; that stretch reads VIGKVWLTVLFIFRILVLGAA. Topologically, residues 41–71 are extracellular; sequence AEDVWGDEQSDFTCNTQQPGCENVCYDRAFP. Disulfide bonds link Cys54–Cys192, Cys61–Cys186, and Cys65–Cys181. The helical transmembrane segment at 72–92 threads the bilayer; it reads ISHIRFWALQIIFVSTPTLIY. The Cytoplasmic segment spans residues 93 to 152; sequence LGHVLHIVRMEEKKKEREEEEQLKRESPSPKEPPQDNPSSRDDRGRVRMAGALLRTYVFN. The segment covering 108–121 has biased composition (basic and acidic residues); sequence EREEEEQLKRESPS. A disordered region spans residues 108–136; the sequence is EREEEEQLKRESPSPKEPPQDNPSSRDDR. A helical transmembrane segment spans residues 153-173; that stretch reads IIFKTLFEVGFIAGQYFLYGF. The Extracellular portion of the chain corresponds to 174–201; that stretch reads ELKPLYRCDRWPCPNTVDCFISRPTEKT. A helical membrane pass occupies residues 202-222; the sequence is IFIIFMLAVACASLLLNMLEI. Residues 223-435 lie on the Cytoplasmic side of the membrane; it reads YHLGWKKLKQ…GRARPEDLAI (213 aa). A disordered region spans residues 332-435; it reads AAERQPPALK…GRARPEDLAI (104 aa). 2 stretches are compositionally biased toward low complexity: residues 342–389 and 415–427; these read AYPA…ALAG and GRAS…SSGR.

Belongs to the connexin family. Alpha-type (group II) subfamily. In terms of assembly, a hemichannel or connexon is composed of a hexamer of connexins. A functional gap junction is formed by the apposition of two hemichannels. Forms heteromeric channels with GJA8.

It is found in the cell membrane. Its subcellular location is the cell junction. It localises to the gap junction. In terms of biological role, structural component of lens fiber gap junctions. Gap junctions are dodecameric channels that connect the cytoplasm of adjoining cells. They are formed by the docking of two hexameric hemichannels, one from each cell membrane. Small molecules and ions diffuse from one cell to a neighboring cell via the central pore. This Homo sapiens (Human) protein is Gap junction alpha-3 protein (GJA3).